Here is an 801-residue protein sequence, read N- to C-terminus: U-box domain-containing protein 44 (801 aa).

Residues 22–101 form the U-box domain; the sequence is HIYEAFICPL…EEWRSRNDAA (80 aa). ARM repeat units follow at residues 134–173, 176–215, 218–259, 261–300, 301–340, 342–386, 390–429, 435–475, and 480–521; these read RSNR…VVVE, DESK…ELSK, ALCE…NMER, EEIV…ELPL, NNDV…KISS, EGSA…NIVN, DFDK…GLTS, PKVV…NLSP, and ELAK…ELPD.

In terms of assembly, interacts with AAO3. Binds to SD129. As to expression, expressed in leaves, root vasculature and guard cells.

It catalyses the reaction S-ubiquitinyl-[E2 ubiquitin-conjugating enzyme]-L-cysteine + [acceptor protein]-L-lysine = [E2 ubiquitin-conjugating enzyme]-L-cysteine + N(6)-ubiquitinyl-[acceptor protein]-L-lysine.. Its pathway is protein modification; protein ubiquitination. Functionally, functions as an E3 ubiquitin-protein ligase. Prevents premature senescence probably by targeting proteins involved in this process for degradation. Promotes the degradation of AAO3 and thus represses abscisic acid (ABA) biosynthesis. This chain is U-box domain-containing protein 44 (PUB44), found in Arabidopsis thaliana (Mouse-ear cress).